A 70-amino-acid polypeptide reads, in one-letter code: Putative membrane protein insertion efficiency factor (70 aa).

This sequence belongs to the UPF0161 family.

The protein localises to the cell membrane. Its function is as follows. Could be involved in insertion of integral membrane proteins into the membrane. In Lachnoclostridium phytofermentans (strain ATCC 700394 / DSM 18823 / ISDg) (Clostridium phytofermentans), this protein is Putative membrane protein insertion efficiency factor.